The primary structure comprises 252 residues: Bridging integrator 3 homolog (252 aa).

A BAR domain is found at 8–231; sequence GGPKKQIVPK…VDEVQLSDAE (224 aa). Coiled coils occupy residues 17–57, 119–150, and 224–244; these read KTVE…MSKS, SLNM…KDKT, and EVQL…AELR.

It is found in the cytoplasm. The protein resides in the cytoskeleton. In terms of biological role, involved in cytokinesis and septation where it has a role in the localization of F-actin. The chain is Bridging integrator 3 homolog (bin3) from Xenopus laevis (African clawed frog).